We begin with the raw amino-acid sequence, 157 residues long: S-ribosylhomocysteine lyase (157 aa).

3 residues coordinate Fe cation: histidine 54, histidine 58, and cysteine 126.

This sequence belongs to the LuxS family. As to quaternary structure, homodimer. Fe cation is required as a cofactor.

It catalyses the reaction S-(5-deoxy-D-ribos-5-yl)-L-homocysteine = (S)-4,5-dihydroxypentane-2,3-dione + L-homocysteine. Functionally, involved in the synthesis of autoinducer 2 (AI-2) which is secreted by bacteria and is used to communicate both the cell density and the metabolic potential of the environment. The regulation of gene expression in response to changes in cell density is called quorum sensing. Catalyzes the transformation of S-ribosylhomocysteine (RHC) to homocysteine (HC) and 4,5-dihydroxy-2,3-pentadione (DPD). The polypeptide is S-ribosylhomocysteine lyase (Bacillus licheniformis (strain ATCC 14580 / DSM 13 / JCM 2505 / CCUG 7422 / NBRC 12200 / NCIMB 9375 / NCTC 10341 / NRRL NRS-1264 / Gibson 46)).